The sequence spans 1003 residues: Glycine--tRNA ligase (1003 aa).

A glycine--tRNA ligase alpha subunit region spans residues 1-310 (MSSQPLTLQT…VTPKKIPTIC (310 aa)). Residues 311-1003 (QPEDFLLEIG…CFGFYAWGVL (693 aa)) form a glycine--tRNA ligase beta subunit region.

The protein belongs to the class-II aminoacyl-tRNA synthetase family.

The protein localises to the cytoplasm. The enzyme catalyses tRNA(Gly) + glycine + ATP = glycyl-tRNA(Gly) + AMP + diphosphate. The protein is Glycine--tRNA ligase (glyQS) of Chlamydia trachomatis serovar D (strain ATCC VR-885 / DSM 19411 / UW-3/Cx).